A 30-amino-acid polypeptide reads, in one-letter code: Conopeptide Vi002 (30 aa).

Expressed by the venom gland.

It localises to the secreted. This is Conopeptide Vi002 from Conus virgo (Virgin cone).